The primary structure comprises 311 residues: Aspartate carbamoyltransferase catalytic subunit (311 aa).

Residues Arg-58 and Thr-59 each coordinate carbamoyl phosphate. Lys-86 contacts L-aspartate. The carbamoyl phosphate site is built by Arg-108, His-136, and Gln-139. Residues Arg-169 and Arg-224 each coordinate L-aspartate. Carbamoyl phosphate is bound by residues Gly-265 and Pro-266.

Belongs to the aspartate/ornithine carbamoyltransferase superfamily. ATCase family. Heterododecamer (2C3:3R2) of six catalytic PyrB chains organized as two trimers (C3), and six regulatory PyrI chains organized as three dimers (R2).

The enzyme catalyses carbamoyl phosphate + L-aspartate = N-carbamoyl-L-aspartate + phosphate + H(+). The protein operates within pyrimidine metabolism; UMP biosynthesis via de novo pathway; (S)-dihydroorotate from bicarbonate: step 2/3. Functionally, catalyzes the condensation of carbamoyl phosphate and aspartate to form carbamoyl aspartate and inorganic phosphate, the committed step in the de novo pyrimidine nucleotide biosynthesis pathway. The chain is Aspartate carbamoyltransferase catalytic subunit from Geobacter sulfurreducens (strain ATCC 51573 / DSM 12127 / PCA).